The sequence spans 356 residues: Gluconolactonase (356 aa).

The tat-type signal signal peptide spans 1–35 (MTTGRMSRRECLSAAVMVPIAAMTATATITGSAQA).

Homodimer. In terms of processing, predicted to be exported by the Tat system. The position of the signal peptide cleavage has been experimentally proven.

Its subcellular location is the periplasm. It carries out the reaction D-glucono-1,5-lactone + H2O = D-gluconate + H(+). Its pathway is carbohydrate acid metabolism; D-gluconate biosynthesis; D-gluconate from D-glucono-1,5-lactone: step 1/1. Its function is as follows. Hydrolyzes the gluconolactone formed by glucose-fructose oxidoreductase, and that formed in aerobic conditions by the glucose dehydrogenase present. The polypeptide is Gluconolactonase (gnl) (Zymomonas mobilis subsp. mobilis (strain ATCC 31821 / ZM4 / CP4)).